Consider the following 141-residue polypeptide: Nucleoside diphosphate kinase (141 aa).

Residues Lys11, Phe59, Arg87, Thr93, Arg104, and Asn114 each contribute to the ATP site. Catalysis depends on His117, which acts as the Pros-phosphohistidine intermediate.

It belongs to the NDK family. Homotetramer. Mg(2+) is required as a cofactor.

The protein resides in the cytoplasm. The catalysed reaction is a 2'-deoxyribonucleoside 5'-diphosphate + ATP = a 2'-deoxyribonucleoside 5'-triphosphate + ADP. The enzyme catalyses a ribonucleoside 5'-diphosphate + ATP = a ribonucleoside 5'-triphosphate + ADP. Major role in the synthesis of nucleoside triphosphates other than ATP. The ATP gamma phosphate is transferred to the NDP beta phosphate via a ping-pong mechanism, using a phosphorylated active-site intermediate. This chain is Nucleoside diphosphate kinase, found in Acidithiobacillus ferrooxidans (strain ATCC 53993 / BNL-5-31) (Leptospirillum ferrooxidans (ATCC 53993)).